A 460-amino-acid polypeptide reads, in one-letter code: Cysteine--tRNA ligase (460 aa).

Cys29 contributes to the Zn(2+) binding site. The 'HIGH' region signature appears at 31–41; sequence ATPQSSPHIGH. The Zn(2+) site is built by Cys212, His237, and Glu241. The 'KMSKS' region signature appears at 268–272; that stretch reads KMSKS. Lys271 serves as a coordination point for ATP.

Belongs to the class-I aminoacyl-tRNA synthetase family. As to quaternary structure, monomer. It depends on Zn(2+) as a cofactor.

It is found in the cytoplasm. It carries out the reaction tRNA(Cys) + L-cysteine + ATP = L-cysteinyl-tRNA(Cys) + AMP + diphosphate. This chain is Cysteine--tRNA ligase, found in Corynebacterium glutamicum (strain R).